Reading from the N-terminus, the 185-residue chain is UPF0669 protein C6orf120 homolog (185 aa).

An N-terminal signal peptide occupies residues 1-23 (MATPWRCALLMILASQVVILVKC). N-linked (GlcNAc...) asparagine glycosylation is present at Asn-47.

This sequence belongs to the UPF0669 family.

Its subcellular location is the secreted. In terms of biological role, may be involved in induction of apoptosis in CD4(+) T-cells, but not CD8(+) T-cells or hepatocytes. This chain is UPF0669 protein C6orf120 homolog, found in Rattus norvegicus (Rat).